The primary structure comprises 615 residues: MPKLRSATSTEGRNMAGARALWRATGVKDNDFGKPIIAISNSFTQFVPGHVHLKDMGQLVAGAIEEAGGIAKEFNTIAVDDGIAMGHGGMLYSLPSRELIADSVEYMVNAHCADALVCISNCDKITPGMLMAALRLNIPVIFVSGGPMEAGKTKLSDKLIKLDLVDAMVAGADDRVSDADSEQIERSACPTCGSCSGMFTANSMNCLTEALGLSLPGNGSMLATHADRRELFLEAGRRIMDLTTRYYRDDDQSALPRNIANFNAFENAMTLDIAMGGSSNTVLHLLAAAIEAEVDFSMDDIDRLSRLVPHLCKVAPSTPKYHMEDVHRAGGVMGILGELDRAGLLHNDAYHVAGSNLAEVLAKYDIAQSKDEAVHKFFSAGPAGIPTTKAFSQDCRWDSVDIDREAGCIRTREFAFSQEGGLAVLSGNVALDGCIVKTAGVEVENHTFIGSARVYESQDDAVAGILGGEVVEGDVVVIRYEGPKGGPGMQEMLYPTSYLKSRGLGTKCALITDGRFSGGTSGLSIGHVSPEAAAGGTIALVNTGDRIEIDIPARSIKLAISDVELAARRTAMEALGKDAWKPVGRVRQVSMALKAYALLATSADKGAVRDTSKLG.

Position 81 (aspartate 81) interacts with Mg(2+). Residue cysteine 122 coordinates [2Fe-2S] cluster. Mg(2+) is bound by residues aspartate 123 and lysine 124. An N6-carboxylysine modification is found at lysine 124. A [2Fe-2S] cluster-binding site is contributed by cysteine 195. Residue glutamate 491 coordinates Mg(2+). Serine 517 serves as the catalytic Proton acceptor.

This sequence belongs to the IlvD/Edd family. As to quaternary structure, homodimer. [2Fe-2S] cluster is required as a cofactor. It depends on Mg(2+) as a cofactor.

The catalysed reaction is (2R)-2,3-dihydroxy-3-methylbutanoate = 3-methyl-2-oxobutanoate + H2O. The enzyme catalyses (2R,3R)-2,3-dihydroxy-3-methylpentanoate = (S)-3-methyl-2-oxopentanoate + H2O. It functions in the pathway amino-acid biosynthesis; L-isoleucine biosynthesis; L-isoleucine from 2-oxobutanoate: step 3/4. It participates in amino-acid biosynthesis; L-valine biosynthesis; L-valine from pyruvate: step 3/4. In terms of biological role, functions in the biosynthesis of branched-chain amino acids. Catalyzes the dehydration of (2R,3R)-2,3-dihydroxy-3-methylpentanoate (2,3-dihydroxy-3-methylvalerate) into 2-oxo-3-methylpentanoate (2-oxo-3-methylvalerate) and of (2R)-2,3-dihydroxy-3-methylbutanoate (2,3-dihydroxyisovalerate) into 2-oxo-3-methylbutanoate (2-oxoisovalerate), the penultimate precursor to L-isoleucine and L-valine, respectively. The sequence is that of Dihydroxy-acid dehydratase from Shewanella piezotolerans (strain WP3 / JCM 13877).